Consider the following 101-residue polypeptide: Large ribosomal subunit protein bL28 (101 aa).

This sequence belongs to the bacterial ribosomal protein bL28 family.

This chain is Large ribosomal subunit protein bL28, found in Methylorubrum extorquens (strain CM4 / NCIMB 13688) (Methylobacterium extorquens).